Reading from the N-terminus, the 137-residue chain is Protein cornichon homolog 4 (137 aa).

3 helical membrane-spanning segments follow: residues 8-28, 53-73, and 113-133; these read LISFFFLIALVGIIVYQLVCL, FIVQGVLCVFYLLTGHWFMTL, and LAYIVLNLFLTIFWMIYSALD.

This sequence belongs to the cornichon family.

It is found in the membrane. This Arabidopsis thaliana (Mouse-ear cress) protein is Protein cornichon homolog 4.